We begin with the raw amino-acid sequence, 473 residues long: Bifunctional protein HldE (473 aa).

The interval 1–317 (MKLSMPRFDQ…RRAVQREQGS (317 aa)) is ribokinase. Residue 194-197 (NLSE) participates in ATP binding. Aspartate 263 is a catalytic residue. Residues 343 to 473 (FTNGCFDILH…TAIVEKIRQR (131 aa)) form a cytidylyltransferase region.

The protein in the N-terminal section; belongs to the carbohydrate kinase PfkB family. It in the C-terminal section; belongs to the cytidylyltransferase family. In terms of assembly, homodimer.

The catalysed reaction is D-glycero-beta-D-manno-heptose 7-phosphate + ATP = D-glycero-beta-D-manno-heptose 1,7-bisphosphate + ADP + H(+). The enzyme catalyses D-glycero-beta-D-manno-heptose 1-phosphate + ATP + H(+) = ADP-D-glycero-beta-D-manno-heptose + diphosphate. The protein operates within nucleotide-sugar biosynthesis; ADP-L-glycero-beta-D-manno-heptose biosynthesis; ADP-L-glycero-beta-D-manno-heptose from D-glycero-beta-D-manno-heptose 7-phosphate: step 1/4. It functions in the pathway nucleotide-sugar biosynthesis; ADP-L-glycero-beta-D-manno-heptose biosynthesis; ADP-L-glycero-beta-D-manno-heptose from D-glycero-beta-D-manno-heptose 7-phosphate: step 3/4. Its function is as follows. Catalyzes the phosphorylation of D-glycero-D-manno-heptose 7-phosphate at the C-1 position to selectively form D-glycero-beta-D-manno-heptose-1,7-bisphosphate. In terms of biological role, catalyzes the ADP transfer from ATP to D-glycero-beta-D-manno-heptose 1-phosphate, yielding ADP-D-glycero-beta-D-manno-heptose. The sequence is that of Bifunctional protein HldE from Pseudomonas aeruginosa (strain LESB58).